We begin with the raw amino-acid sequence, 519 residues long: Aldehyde dehydrogenase X, mitochondrial (519 aa).

A mitochondrion-targeting transit peptide spans 1–19 (MLNARFLVPRLLCLQGRTT). Lys53 is modified (N6-acetyllysine). Lys54 bears the N6-acetyllysine; alternate mark. N6-succinyllysine; alternate is present on Lys54. An NAD(+)-binding site is contributed by 264–269 (GSTEVG). Glu287 functions as the Proton acceptor in the catalytic mechanism. Cys321 (nucleophile) is an active-site residue. 4 positions are modified to N6-acetyllysine; alternate: Lys366, Lys385, Lys401, and Lys428. N6-succinyllysine; alternate is present on residues Lys366, Lys385, Lys401, and Lys428. Position 431 is an N6-acetyllysine (Lys431).

The protein belongs to the aldehyde dehydrogenase family. In terms of assembly, homotetramer.

The protein resides in the mitochondrion matrix. It carries out the reaction an aldehyde + NAD(+) + H2O = a carboxylate + NADH + 2 H(+). The protein operates within alcohol metabolism; ethanol degradation; acetate from ethanol: step 2/2. Its function is as follows. ALDHs play a major role in the detoxification of alcohol-derived acetaldehyde. They are involved in the metabolism of corticosteroids, biogenic amines, neurotransmitters, and lipid peroxidation. The sequence is that of Aldehyde dehydrogenase X, mitochondrial (Aldh1b1) from Rattus norvegicus (Rat).